Consider the following 562-residue polypeptide: Oligo-1,6-glucosidase (562 aa).

4 residues coordinate Ca(2+): Asp21, Asn23, Asp25, and Asp29. The Nucleophile role is filled by Asp199. Glu256 (proton donor) is an active-site residue.

This sequence belongs to the glycosyl hydrolase 13 family.

The protein localises to the cytoplasm. The catalysed reaction is Hydrolysis of (1-&gt;6)-alpha-D-glucosidic linkages in some oligosaccharides produced from starch and glycogen by alpha-amylase, and in isomaltose.. This is Oligo-1,6-glucosidase (malL) from Parageobacillus thermoglucosidasius (Geobacillus thermoglucosidasius).